The primary structure comprises 317 residues: Ribose-phosphate pyrophosphokinase (317 aa).

Residues D43 to E45 and R102 to Q103 each bind ATP. H136 and D175 together coordinate Mg(2+). Residue K198 is part of the active site. Residues R200, D224, and D228 to T232 each bind D-ribose 5-phosphate.

Belongs to the ribose-phosphate pyrophosphokinase family. Class I subfamily. Homohexamer. Requires Mg(2+) as cofactor.

It is found in the cytoplasm. The enzyme catalyses D-ribose 5-phosphate + ATP = 5-phospho-alpha-D-ribose 1-diphosphate + AMP + H(+). It participates in metabolic intermediate biosynthesis; 5-phospho-alpha-D-ribose 1-diphosphate biosynthesis; 5-phospho-alpha-D-ribose 1-diphosphate from D-ribose 5-phosphate (route I): step 1/1. In terms of biological role, involved in the biosynthesis of the central metabolite phospho-alpha-D-ribosyl-1-pyrophosphate (PRPP) via the transfer of pyrophosphoryl group from ATP to 1-hydroxyl of ribose-5-phosphate (Rib-5-P). The chain is Ribose-phosphate pyrophosphokinase from Oceanobacillus iheyensis (strain DSM 14371 / CIP 107618 / JCM 11309 / KCTC 3954 / HTE831).